The chain runs to 177 residues: Transcriptional repressor NrdR (177 aa).

The segment at 3-34 is a zinc-finger region; the sequence is CLFCQHTDTRVIDSRVSEDGATIRRRRECEAC. Positions 49-139 constitute an ATP-cone domain; that stretch reads PVIIKKDGGR…VYRSFQDVAD (91 aa).

It belongs to the NrdR family. Zn(2+) is required as a cofactor.

Negatively regulates transcription of bacterial ribonucleotide reductase nrd genes and operons by binding to NrdR-boxes. The protein is Transcriptional repressor NrdR of Xylella fastidiosa (strain M23).